The sequence spans 206 residues: Large ribosomal subunit protein uL4 (206 aa).

A disordered region spans residues Lys44–Gly87.

The protein belongs to the universal ribosomal protein uL4 family. Part of the 50S ribosomal subunit.

Its function is as follows. One of the primary rRNA binding proteins, this protein initially binds near the 5'-end of the 23S rRNA. It is important during the early stages of 50S assembly. It makes multiple contacts with different domains of the 23S rRNA in the assembled 50S subunit and ribosome. Functionally, forms part of the polypeptide exit tunnel. This is Large ribosomal subunit protein uL4 from Maridesulfovibrio salexigens (strain ATCC 14822 / DSM 2638 / NCIMB 8403 / VKM B-1763) (Desulfovibrio salexigens).